Here is a 323-residue protein sequence, read N- to C-terminus: Aspartate carbamoyltransferase catalytic subunit (323 aa).

Residues R71 and T72 each coordinate carbamoyl phosphate. K99 provides a ligand contact to L-aspartate. 3 residues coordinate carbamoyl phosphate: R121, H151, and Q154. L-aspartate-binding residues include R184 and R239. G280 and P281 together coordinate carbamoyl phosphate.

This sequence belongs to the aspartate/ornithine carbamoyltransferase superfamily. ATCase family. As to quaternary structure, heterododecamer (2C3:3R2) of six catalytic PyrB chains organized as two trimers (C3), and six regulatory PyrI chains organized as three dimers (R2).

It carries out the reaction carbamoyl phosphate + L-aspartate = N-carbamoyl-L-aspartate + phosphate + H(+). Its pathway is pyrimidine metabolism; UMP biosynthesis via de novo pathway; (S)-dihydroorotate from bicarbonate: step 2/3. Catalyzes the condensation of carbamoyl phosphate and aspartate to form carbamoyl aspartate and inorganic phosphate, the committed step in the de novo pyrimidine nucleotide biosynthesis pathway. This Ralstonia nicotianae (strain ATCC BAA-1114 / GMI1000) (Ralstonia solanacearum) protein is Aspartate carbamoyltransferase catalytic subunit.